A 120-amino-acid polypeptide reads, in one-letter code: Seminal plasma protein HSP-1 (120 aa).

Tandem repeats lie at residues 1–13 and 16–28. Positions 1–28 are 2 X approximate repeats; the sequence is DLQTTGADHSATVNPDQQLIMTKHSATV. O-linked (GalNAc...) threonine glycosylation is found at Thr-5, Thr-12, Thr-22, and Thr-27. 2 consecutive Fibronectin type-II domains span residues 29–73 and 74–120; these read TPEN…YCAA and TDYA…WKYC. Cystine bridges form between Cys-34/Cys-58, Cys-48/Cys-71, Cys-79/Cys-105, and Cys-93/Cys-120.

The protein belongs to the seminal plasma protein family. As to quaternary structure, one glycoform exists as a monomer while the other forms a heterotetramer with HSP-2 and binds heparin. O-glycosylated on Thr. There are two forms of HSP-1 which probably differ in the amount of sialylation of polysaccharide. In terms of tissue distribution, major component of seminal plasma.

The protein localises to the secreted. Could enhance the fertilizing capacity of spermatozoa upon interaction with heparin-like glycosaminoglycans present in the female genital tract. The sequence is that of Seminal plasma protein HSP-1 from Equus caballus (Horse).